Consider the following 188-residue polypeptide: Adrenodoxin, mitochondrial (188 aa).

The transit peptide at 1-64 (MAAAPGARLL…RPLSVSARAR (64 aa)) directs the protein to the mitochondrion. Position 67 is a phosphoserine (S67). The 2Fe-2S ferredoxin-type domain occupies 69 to 175 (DKITVHFKNR…NMTVRVPEAV (107 aa)). At K70 the chain carries N6-acetyllysine; alternate. K70 carries the N6-succinyllysine; alternate modification. Residues C110, C116, C119, and C156 each coordinate [2Fe-2S] cluster. K162 is subject to N6-succinyllysine. S181 bears the Phosphoserine mark.

Belongs to the adrenodoxin/putidaredoxin family. As to quaternary structure, interacts with CYP11A1. [2Fe-2S] cluster serves as cofactor.

It localises to the mitochondrion matrix. In terms of biological role, essential for the synthesis of various steroid hormones, participates in the reduction of mitochondrial cytochrome P450 for steroidogenesis. Transfers electrons from adrenodoxin reductase to CYP11A1, a cytochrome P450 that catalyzes cholesterol side-chain cleavage. Does not form a ternary complex with adrenodoxin reductase and CYP11A1 but shuttles between the two enzymes to transfer electrons. This is Adrenodoxin, mitochondrial (Fdx1) from Mus musculus (Mouse).